We begin with the raw amino-acid sequence, 243 residues long: rRNA adenine N-6-methyltransferase (243 aa).

Positions 11, 13, 38, 59, 84, and 101 each coordinate S-adenosyl-L-methionine.

This sequence belongs to the class I-like SAM-binding methyltransferase superfamily. rRNA adenine N(6)-methyltransferase family.

The enzyme catalyses adenosine(2085) in 23S rRNA + 2 S-adenosyl-L-methionine = N(6)-dimethyladenosine(2085) in 23S rRNA + 2 S-adenosyl-L-homocysteine + 2 H(+). In terms of biological role, this protein produces a dimethylation of the adenine residue at position 2085 in 23S rRNA, resulting in reduced affinity between ribosomes and macrolide-lincosamide-streptogramin B antibiotics. The polypeptide is rRNA adenine N-6-methyltransferase (ermA1) (Staphylococcus aureus (strain Mu50 / ATCC 700699)).